The sequence spans 233 residues: Probable 2-phosphosulfolactate phosphatase (233 aa).

The protein belongs to the ComB family. Mg(2+) serves as cofactor.

The enzyme catalyses (2R)-O-phospho-3-sulfolactate + H2O = (2R)-3-sulfolactate + phosphate. The polypeptide is Probable 2-phosphosulfolactate phosphatase (Symbiobacterium thermophilum (strain DSM 24528 / JCM 14929 / IAM 14863 / T)).